Here is a 331-residue protein sequence, read N- to C-terminus: UAP56-interacting factor (331 aa).

Residues 16–34 carry the UAP56-binding motif motif; sequence APDKVDMSLDDIIRLNKKE. 3 disordered regions span residues 30–51, 63–99, and 158–193; these read LNKK…LQKG, RARG…RRRG, and GQRR…TQRE. The span at 166–175 shows a compositional bias: polar residues; the sequence is TDIQRGLNST.

It belongs to the UIF family.

It is found in the nucleus. The protein localises to the nucleoplasm. Its subcellular location is the nucleus speckle. In terms of biological role, required for mRNA export from the nucleus to the cytoplasm. Acts as an adapter that uses the ddx39b/uap56-nfx1 pathway to ensure efficient mRNA export and delivering to the nuclear pore. The chain is UAP56-interacting factor (fyttd1) from Salmo salar (Atlantic salmon).